A 193-amino-acid chain; its full sequence is MDNLRETFLSLEDGLGSSDSPGLLSSWDWKDRAGPFELNQASPSQSLSPAPSLESYSSSPCPAVAGLPCEHGGASSGGSEGCSVGGASGLVEVDYNMLAFQPTHLQGGGGPKAQKGTKVRMSVQRRRKASEREKLRMRTLADALHTLRNYLPPVYSQRGQPLTKIQTLKYTIKYIGELTDLLNRGREPRAQSA.

Residues 34–59 (GPFELNQASPSQSLSPAPSLESYSSS) are disordered. The span at 40–59 (QASPSQSLSPAPSLESYSSS) shows a compositional bias: low complexity. A bHLH domain is found at 124 to 178 (QRRRKASEREKLRMRTLADALHTLRNYLPPVYSQRGQPLTKIQTLKYTIKYIGEL).

It is found in the nucleus. In terms of biological role, involved in specifying the paraxial, but not dorsal, mesoderm. May regulate the expression of T-box transcription factors required for mesoderm formation and differentiation. This is Mesogenin-1 (MSGN1) from Homo sapiens (Human).